The following is a 465-amino-acid chain: GTPase Der (465 aa).

2 EngA-type G domains span residues 3 to 167 and 179 to 352; these read PLVA…PEEG and VRIA…ASAT. GTP is bound by residues 9–16, 57–61, 119–122, 185–192, 232–236, and 297–300; these read GRPNVGKS, DTGGI, NKID, DTAGL, and NKWD. The KH-like domain occupies 353 to 437; sequence HEFSTSEVNQ…PVRFIFREGA (85 aa).

The protein belongs to the TRAFAC class TrmE-Era-EngA-EngB-Septin-like GTPase superfamily. EngA (Der) GTPase family. In terms of assembly, associates with the 50S ribosomal subunit.

Functionally, GTPase that plays an essential role in the late steps of ribosome biogenesis. The protein is GTPase Der of Xanthomonas campestris pv. campestris (strain 8004).